A 525-amino-acid polypeptide reads, in one-letter code: uncharacterized protein (525 aa).

2 consecutive transmembrane segments (helical) span residues phenylalanine 28–isoleucine 48 and glycine 353–proline 373. One can recognise a Pterin-binding domain in the interval aspartate 146 to phenylalanine 394.

The protein localises to the cell membrane. In terms of biological role, unknown. Does not possess dihydropteroate synthase (DHPS) activity since it does not catalyze the condensation of 6-hydroxymethyl-7,8-dihydropterin pyrophosphate (DHPP) and 4-aminobenzoate to form 7,8-dihydropteroate. This is an uncharacterized protein from Methanocaldococcus jannaschii (strain ATCC 43067 / DSM 2661 / JAL-1 / JCM 10045 / NBRC 100440) (Methanococcus jannaschii).